Reading from the N-terminus, the 203-residue chain is Glycerol-3-phosphate acyltransferase (203 aa).

4 helical membrane passes run 7 to 27, 82 to 102, 118 to 138, and 141 to 161; these read TLLM…VLVC, AVSL…PVFF, APIG…LLLI, and YSSL…WWLD.

Belongs to the PlsY family. As to quaternary structure, probably interacts with PlsX.

The protein resides in the cell inner membrane. It catalyses the reaction an acyl phosphate + sn-glycerol 3-phosphate = a 1-acyl-sn-glycero-3-phosphate + phosphate. It functions in the pathway lipid metabolism; phospholipid metabolism. Its function is as follows. Catalyzes the transfer of an acyl group from acyl-phosphate (acyl-PO(4)) to glycerol-3-phosphate (G3P) to form lysophosphatidic acid (LPA). This enzyme utilizes acyl-phosphate as fatty acyl donor, but not acyl-CoA or acyl-ACP. This is Glycerol-3-phosphate acyltransferase from Shewanella baltica (strain OS223).